The following is a 198-amino-acid chain: Integrator complex subunit 8-like protein (198 aa).

The protein belongs to the Integrator subunit 8 family. As to quaternary structure, component of the Integrator complex. The core complex associates with protein phosphatase 2A subunits, to form the Integrator-PP2A (INTAC) complex.

It is found in the nucleus. Its subcellular location is the chromosome. In terms of biological role, component of the integrator complex, a multiprotein complex that terminates RNA polymerase II (Pol II) transcription in the promoter-proximal region of genes. The integrator complex provides a quality checkpoint during transcription elongation by driving premature transcription termination of transcripts that are unfavorably configured for transcriptional elongation: the complex terminates transcription by (1) catalyzing dephosphorylation of the C-terminal domain (CTD) of Pol II subunit polr2a, (2) degrading the exiting nascent RNA transcript via endonuclease activity and (3) promoting the release of Pol II from bound DNA. The integrator complex is also involved in terminating the synthesis of non-coding Pol II transcripts, such as enhancer RNAs (eRNAs), small nuclear RNAs (snRNAs), telomerase RNAs and long non-coding RNAs (lncRNAs). Within the integrator complex, INTS8 is required for the recruitment of protein phosphatase 2A (PP2A) to transcription pause-release checkpoint. This chain is Integrator complex subunit 8-like protein, found in Dictyostelium discoideum (Social amoeba).